The chain runs to 69 residues: MLKILIKIIGIYQRYLSPLTGPTCRFYPSCSTYAKESLMRHGLLKGLWYSAVRIMKCHPYHPGGYDPVK.

It belongs to the UPF0161 family.

The protein resides in the cell inner membrane. Functionally, could be involved in insertion of integral membrane proteins into the membrane. In Geobacter metallireducens (strain ATCC 53774 / DSM 7210 / GS-15), this protein is Putative membrane protein insertion efficiency factor.